The following is a 495-amino-acid chain: uncharacterized protein (495 aa).

Low complexity predominate over residues 305–317 (DYNNNNNENYSGS). The tract at residues 305-404 (DYNNNNNENY…LDEEDNRKNK (100 aa)) is disordered. The segment covering 335-347 (YDNDENNDDENND) has biased composition (acidic residues). Low complexity predominate over residues 348–363 (ENNNNNNNNNNNNNNN). A compositionally biased stretch (acidic residues) spans 386-398 (SDDDEADNELDEE).

This is an uncharacterized protein from Dictyostelium discoideum (Social amoeba).